We begin with the raw amino-acid sequence, 240 residues long: MQVDKTSFTPLYKQLFFIICQQIQNGSLPLGSQLPTQKEIARSYNVSLIVVKQAWSELINAGIISSQRGSGSVVCSVPEGVSYGHTFRGITRDLQDASVAIENRILEIAPRRARDAQADGLSLPAQHHYLYISRIRCLNNRPFNHEKIYLDLSFFPGLELTPQALEHTSLYSLLNVTSDSAIEKVEAILPSADLCEKLQIAANKPLLSVARQTFQAGKDSPFEYCRYYVLSEYFGEIHYH.

Residues 9–77 enclose the HTH gntR-type domain; that stretch reads TPLYKQLFFI…RGSGSVVCSV (69 aa). Positions 37–56 form a DNA-binding region, H-T-H motif; sequence QKEIARSYNVSLIVVKQAWS.

Functionally, represses the expression of the STM4065-STM4067 operon. The polypeptide is HTH-type transcriptional repressor STM4068 (Salmonella typhimurium (strain LT2 / SGSC1412 / ATCC 700720)).